The primary structure comprises 678 residues: Pescadillo homolog (678 aa).

Residues Pro-265–Thr-289 form a disordered region. Positions Thr-269 to Thr-289 are enriched in low complexity. One can recognise a BRCT domain in the interval Asp-352 to Ile-442. Disordered regions lie at residues Thr-485–Lys-601 and Ala-626–Lys-678. Acidic residues predominate over residues Ser-505 to Glu-518. The span at His-519–Glu-531 shows a compositional bias: basic and acidic residues. The segment covering Val-541 to Ser-574 has biased composition (acidic residues). Residues Val-581–Glu-640 are a coiled coil. Basic and acidic residues-rich tracts occupy residues Lys-585–Lys-601 and Leu-633–Lys-643. A compositionally biased stretch (low complexity) spans Val-649–Lys-678.

It belongs to the pescadillo family.

Its subcellular location is the nucleus. The protein resides in the nucleolus. It is found in the nucleoplasm. Required for maturation of ribosomal RNAs and formation of the large ribosomal subunit. This Dictyostelium discoideum (Social amoeba) protein is Pescadillo homolog.